The following is a 500-amino-acid chain: UPF0371 protein SZO_06760 (500 aa).

This sequence belongs to the UPF0371 family.

The polypeptide is UPF0371 protein SZO_06760 (Streptococcus equi subsp. zooepidemicus (strain H70)).